The sequence spans 257 residues: Type III pantothenate kinase (257 aa).

Residue 5 to 12 (DIGNTNIK) coordinates ATP. Position 107 to 110 (107 to 110 (GSDR)) interacts with substrate. Residue Asp-109 is the Proton acceptor of the active site. Thr-133 lines the ATP pocket.

This sequence belongs to the type III pantothenate kinase family. As to quaternary structure, homodimer. It depends on NH4(+) as a cofactor. Requires K(+) as cofactor.

Its subcellular location is the cytoplasm. The enzyme catalyses (R)-pantothenate + ATP = (R)-4'-phosphopantothenate + ADP + H(+). The protein operates within cofactor biosynthesis; coenzyme A biosynthesis; CoA from (R)-pantothenate: step 1/5. Functionally, catalyzes the phosphorylation of pantothenate (Pan), the first step in CoA biosynthesis. This is Type III pantothenate kinase from Ehrlichia ruminantium (strain Gardel).